A 435-amino-acid chain; its full sequence is Centrosomal protein of 55 kDa (435 aa).

3 disordered regions span residues 1–63 (MAAK…TDKA), 213–239 (HKEA…KVSR), and 268–287 (ERRR…ALLQ). Coiled-coil stretches lie at residues 18-140 (SSSS…KNKY) and 185-373 (EAYV…RESR). Composition is skewed to basic and acidic residues over residues 26–49 (AELE…DMKR) and 213–222 (HKEAKSDDQS).

The protein localises to the cytoplasm. It localises to the cytoskeleton. It is found in the microtubule organizing center. Its subcellular location is the centrosome. The protein resides in the centriole. The protein localises to the cleavage furrow. It localises to the midbody. It is found in the midbody ring. Functionally, plays a role in mitotic exit and cytokinesis. Recruits PDCD6IP and TSG101 to midbody during cytokinesis. Required for successful completion of cytokinesis. Not required for microtubule nucleation. Plays a role in the development of the brain and kidney. The sequence is that of Centrosomal protein of 55 kDa from Danio rerio (Zebrafish).